The primary structure comprises 132 residues: Intraflagellar transport protein 20 homolog (132 aa).

The IFT57-binding stretch occupies residues 70–132; that stretch reads MKAIGARNLL…EFIDQFIFQK (63 aa). Residues 74–116 are a coiled coil; that stretch reads GARNLLKSIAKQREAQQQQLQALIAEKKTQLERYRVEYEALCK.

Component of the IFT complex B, at least composed of IFT20, IFT22, IFT25, IFT27, IFT46, IFT52, TRAF3IP1/IFT54, IFT57, IFT74, IFT80, IFT81, and IFT88. Interacts directly with IFT57 and KIF3B/Kinesin II subunit. Interacts with IFT88. Interacts with CEP83. Interacts with SPEF2 (via C-terminus). Interacts with CBL and CBLB. Interacts with TRIP11. Interacts with TTC21A. Interacts with SPATA1. Interacts with USH1G. Interacts with CCDC146. Interacts with CEP78; regulating IFT20 stability and localization. Expressed predominantly in the testis (at protein level). Expressed in kidney and retina. Expression is up-regulated during spermiogenesis.

Its subcellular location is the golgi apparatus. The protein localises to the cis-Golgi network. It is found in the cytoplasm. The protein resides in the cytoskeleton. It localises to the microtubule organizing center. Its subcellular location is the centrosome. The protein localises to the centriole. It is found in the cilium basal body. The protein resides in the cell projection. It localises to the cilium. Its subcellular location is the cytoplasmic vesicle. The protein localises to the secretory vesicle. It is found in the acrosome. Part of intraflagellar transport (IFT) particles involved in ciliary process assembly. May play a role in the trafficking of ciliary membrane proteins from the Golgi complex to the cilium. Regulates the ciliary platelet-derived growth factor receptor-alpha (PDGFRA) signaling pathway. Required for protein stability of E3 ubiquitin ligases CBL and CBLB that mediate ubiquitination and internalization of PDGFRA for proper feedback inhibition of PDGFRA signaling. Essential for male fertility. Plays an important role in spermatogenesis, particularly spermiogenesis, when germ cells form flagella. May play a role in the transport of flagellar proteins ODF2 and SPAG16 to build sperm flagella and in the removal of redundant sperm cytoplasm. Also involved in autophagy since it is required for trafficking of ATG16L and the expansion of the autophagic compartment. This Mus musculus (Mouse) protein is Intraflagellar transport protein 20 homolog (Ift20).